A 111-amino-acid chain; its full sequence is BET1-like protein (111 aa).

The Cytoplasmic portion of the chain corresponds to 1 to 86 (MADWTRAQSS…VARSGRDTRK (86 aa)). Residues serine 9 and serine 37 each carry the phosphoserine modification. One can recognise a t-SNARE coiled-coil homology domain in the interval 15 to 77 (EIVDRENKRM…TGSVKRFSTV (63 aa)). Residues 87-107 (LLCGMAVVLIVAFFILSYLFS) traverse the membrane as a helical; Anchor for type IV membrane protein segment. At 108 to 111 (RTRT) the chain is on the vesicular side.

As to quaternary structure, component of a SNARE complex consisting of STX5, YKT6, GOSR1 and BET1L. Interacts with STX5. In terms of tissue distribution, widely expressed. Highest levels in heart, liver, skeletal muscle and kidney.

The protein localises to the golgi apparatus membrane. Its subcellular location is the golgi apparatus. It localises to the trans-Golgi network membrane. Functionally, vesicle SNARE required for targeting and fusion of retrograde transport vesicles with the Golgi complex. Required for the integrity of the Golgi complex. The sequence is that of BET1-like protein from Rattus norvegicus (Rat).